The following is a 317-amino-acid chain: 2,3-dihydroxyphenylpropionate/2,3-dihydroxicinnamic acid 1,2-dioxygenase 2 (317 aa).

Catalysis depends on His-115, which acts as the Proton donor. The Proton acceptor role is filled by His-179.

This sequence belongs to the LigB/MhpB extradiol dioxygenase family. Homotetramer. Requires Fe(2+) as cofactor.

It carries out the reaction 3-(2,3-dihydroxyphenyl)propanoate + O2 = (2Z,4E)-2-hydroxy-6-oxonona-2,4-dienedioate + H(+). It catalyses the reaction (2E)-3-(2,3-dihydroxyphenyl)prop-2-enoate + O2 = (2Z,4E,7E)-2-hydroxy-6-oxonona-2,4,7-trienedioate + H(+). It functions in the pathway aromatic compound metabolism; 3-phenylpropanoate degradation. Catalyzes the non-heme iron(II)-dependent oxidative cleavage of 2,3-dihydroxyphenylpropionic acid and 2,3-dihydroxicinnamic acid into 2-hydroxy-6-ketononadienedioate and 2-hydroxy-6-ketononatrienedioate, respectively. The protein is 2,3-dihydroxyphenylpropionate/2,3-dihydroxicinnamic acid 1,2-dioxygenase 2 of Dechloromonas aromatica (strain RCB).